The primary structure comprises 381 residues: Queuine tRNA-ribosyltransferase (381 aa).

Asp-96 functions as the Proton acceptor in the catalytic mechanism. Substrate-binding positions include 96-100 (DSGGF), Asp-150, Gln-193, and Gly-220. The RNA binding stretch occupies residues 251-257 (GVGSPDS). Catalysis depends on Asp-270, which acts as the Nucleophile. Positions 275–279 (TRIAR) are RNA binding; important for wobble base 34 recognition. Residues Cys-308, Cys-310, Cys-313, and His-339 each contribute to the Zn(2+) site.

The protein belongs to the queuine tRNA-ribosyltransferase family. As to quaternary structure, homodimer. Within each dimer, one monomer is responsible for RNA recognition and catalysis, while the other monomer binds to the replacement base PreQ1. Requires Zn(2+) as cofactor.

The enzyme catalyses 7-aminomethyl-7-carbaguanine + guanosine(34) in tRNA = 7-aminomethyl-7-carbaguanosine(34) in tRNA + guanine. It functions in the pathway tRNA modification; tRNA-queuosine biosynthesis. Functionally, catalyzes the base-exchange of a guanine (G) residue with the queuine precursor 7-aminomethyl-7-deazaguanine (PreQ1) at position 34 (anticodon wobble position) in tRNAs with GU(N) anticodons (tRNA-Asp, -Asn, -His and -Tyr). Catalysis occurs through a double-displacement mechanism. The nucleophile active site attacks the C1' of nucleotide 34 to detach the guanine base from the RNA, forming a covalent enzyme-RNA intermediate. The proton acceptor active site deprotonates the incoming PreQ1, allowing a nucleophilic attack on the C1' of the ribose to form the product. After dissociation, two additional enzymatic reactions on the tRNA convert PreQ1 to queuine (Q), resulting in the hypermodified nucleoside queuosine (7-(((4,5-cis-dihydroxy-2-cyclopenten-1-yl)amino)methyl)-7-deazaguanosine). The polypeptide is Queuine tRNA-ribosyltransferase (Bacillus licheniformis (strain ATCC 14580 / DSM 13 / JCM 2505 / CCUG 7422 / NBRC 12200 / NCIMB 9375 / NCTC 10341 / NRRL NRS-1264 / Gibson 46)).